The primary structure comprises 127 residues: MIFRTNYIVIFIVSIFISMLWQPVHLSVFVILIVAWLYVYSRDNEPWVIFGSVIDDSTLVLVLLVLTIGIFLLTDVSRGIVIGVLAGLPVVLVHGMCRRNTEMLFVLEDDEEKVAMNTSSSSLSSSS.

A run of 3 helical transmembrane segments spans residues 15–35, 53–73, and 76–96; these read IFIS…LIVA, VIDD…IFLL, and VSRG…VHGM.

This sequence belongs to the PRA1 family.

Its subcellular location is the endoplasmic reticulum membrane. In terms of biological role, may be involved in both secretory and endocytic intracellular trafficking in the endosomal/prevacuolar compartments. The polypeptide is PRA1 family protein C (PRA1C) (Arabidopsis thaliana (Mouse-ear cress)).